The sequence spans 788 residues: MEPGKGRAQPTRQVLLFFVFLGGSLVYSETWSYSIAEEMEVGTFIANVVKDMGLDVEDLVARGARVIFDDYKPYLRLDPQNGDLLLNEQLDREALCDLTEPCILHFQVLFENPLQFFRAELLVKDINDHTPTFLNNHILLKISEGATLGTLFQIDSAQDLDVGKNGVQNYTISPNPHFHLKLRDGDEGRKYPELVLDQSLDREKESQLSLTLTAVDGGSPPRSGTTLINVVVLDINDNAPEFEKPVYEVHVPESSPLDSLIIKASATDLDAGINGELSYSFSHVSRDVRKTFEIHPISGEVYLKAPLDFEIIQSYIINIQAIDGGSLSGKSSILVRVVDVNDNPPEIAMTSLTSPIPENSSPEMVVAVFSIRDQDAGDNGRMVGSIQDNLPFVLKPTFKNFYALVTEHPLDREVRNEYNITITVTDLGTPRLKTQHNITVLVSDVNDNAPAFTQTSYTLFVRENNSPALHIGSVSATDRDSGTNAQVTYSLLPPQDPHLPLASLVSINTDNGHLFALRSLDYEALQAFEFHVGATDRGSPALSSEALVRVLVLDANDNSPFVLYPLQNGSAPCTELVPRAAEPGYLVTKVVAVDGDSGQNAWLSYQLLKATEPGLFGVWAHNGEVRTARLLSERDVAKHRLVVLVKDNGEPPRSATATLQVLLVDGFSQPYLPLPEAAPSQAQADSLTVYLVVALASVSSLFLFSVFLFVAVRLCRRSRAASVGRCSVPEGPFPGHLLDVSGTGTLSQSYQYEVCLTGGSGANEFKFLKPVIPNLLSRDSDMEKAPPF.

The first 28 residues, 1–28 (MEPGKGRAQPTRQVLLFFVFLGGSLVYS), serve as a signal peptide directing secretion. Cadherin domains are found at residues 29 to 133 (ETWS…TPTF), 134 to 242 (LNNH…APEF), 243 to 347 (EKPV…PPEI), 348 to 452 (AMTS…APAF), and 453 to 562 (TQTS…SPFV). Topologically, residues 29 to 691 (ETWSYSIAEE…AQADSLTVYL (663 aa)) are extracellular. Asn169 carries N-linked (GlcNAc...) asparagine glycosylation. Asn419 and Asn437 each carry an N-linked (GlcNAc...) asparagine glycan. N-linked (GlcNAc...) asparagine glycosylation is present at Asn568. Positions 569-672 (GSAPCTELVP…LVDGFSQPYL (104 aa)) constitute a Cadherin 6 domain. Residues 692-712 (VVALASVSSLFLFSVFLFVAV) form a helical membrane-spanning segment. Residues 713 to 788 (RLCRRSRAAS…DSDMEKAPPF (76 aa)) are Cytoplasmic-facing.

The protein resides in the cell membrane. Functionally, potential calcium-dependent cell-adhesion protein. The sequence is that of Protocadherin beta-18 (PCDHB18) from Pan troglodytes (Chimpanzee).